The sequence spans 432 residues: Glycosyltransferase 6 (432 aa).

Residues 1 to 18 (MGKPGGAKTRTAVCLSDG) are Cytoplasmic-facing. A helical; Signal-anchor for type II membrane protein membrane pass occupies residues 19-39 (VFFLAGAFMSLTLVWSYFSIF). Residues 40 to 432 (SPSFTSLRHD…LPFDYPNEAW (393 aa)) are Lumenal-facing. Asn315 carries an N-linked (GlcNAc...) asparagine glycan.

It belongs to the glycosyltransferase 34 family.

The protein resides in the golgi apparatus membrane. In terms of biological role, probable glycosyltransferase that may be involved in the biosynthesis of xyloglucan. The polypeptide is Glycosyltransferase 6 (GT6) (Arabidopsis thaliana (Mouse-ear cress)).